The chain runs to 225 residues: Cytochrome b6-f complex iron-sulfur subunit, chloroplastic (225 aa).

A chloroplast-targeting transit peptide spans 1 to 46 (MASTALSTASNPTQLCRSRASLGKPVKGLGFGRERVPRTATTITCQ). A helical transmembrane segment spans residues 69–89 (LLGAISLPTVGMLVPYGAFFI). The region spanning 112–208 (AEEWLKTHGP…ADVDDGKVLF (97 aa)) is the Rieske domain. The [2Fe-2S] cluster site is built by cysteine 154, histidine 156, cysteine 172, and histidine 175. The cysteines at positions 159 and 174 are disulfide-linked.

Belongs to the Rieske iron-sulfur protein family. The 4 large subunits of the cytochrome b6-f complex are cytochrome b6, subunit IV (17 kDa polypeptide, petD), cytochrome f and the Rieske protein, while the 4 small subunits are petG, petL, petM and petN. The complex functions as a dimer. [2Fe-2S] cluster is required as a cofactor.

The protein resides in the plastid. It localises to the chloroplast thylakoid membrane. The catalysed reaction is 2 oxidized [plastocyanin] + a plastoquinol + 2 H(+)(in) = 2 reduced [plastocyanin] + a plastoquinone + 4 H(+)(out). Functionally, component of the cytochrome b6-f complex, which mediates electron transfer between photosystem II (PSII) and photosystem I (PSI), cyclic electron flow around PSI, and state transitions. The protein is Cytochrome b6-f complex iron-sulfur subunit, chloroplastic (petC) of Oryza sativa subsp. japonica (Rice).